We begin with the raw amino-acid sequence, 275 residues long: Formamidopyrimidine-DNA glycosylase (275 aa).

The active-site Schiff-base intermediate with DNA is Pro-2. Residue Glu-3 is the Proton donor of the active site. The active-site Proton donor; for beta-elimination activity is Lys-58. His-89, Arg-108, and Lys-151 together coordinate DNA. The FPG-type; degenerate zinc finger occupies Lys-236–Lys-275. Catalysis depends on Arg-265, which acts as the Proton donor; for delta-elimination activity.

Belongs to the FPG family. Monomer. Zn(2+) is required as a cofactor.

The enzyme catalyses Hydrolysis of DNA containing ring-opened 7-methylguanine residues, releasing 2,6-diamino-4-hydroxy-5-(N-methyl)formamidopyrimidine.. The catalysed reaction is 2'-deoxyribonucleotide-(2'-deoxyribose 5'-phosphate)-2'-deoxyribonucleotide-DNA = a 3'-end 2'-deoxyribonucleotide-(2,3-dehydro-2,3-deoxyribose 5'-phosphate)-DNA + a 5'-end 5'-phospho-2'-deoxyribonucleoside-DNA + H(+). Involved in base excision repair of DNA damaged by oxidation or by mutagenic agents. Acts as a DNA glycosylase that recognizes and removes damaged bases. Has a preference for oxidized purines, such as 7,8-dihydro-8-oxoguanine (8-oxoG). Has AP (apurinic/apyrimidinic) lyase activity and introduces nicks in the DNA strand. Cleaves the DNA backbone by beta-delta elimination to generate a single-strand break at the site of the removed base with both 3'- and 5'-phosphates. This chain is Formamidopyrimidine-DNA glycosylase, found in Acidiphilium cryptum (strain JF-5).